The chain runs to 148 residues: Ribonuclease pancreatic (148 aa).

Positions Met1–Gly25 are cleaved as a signal peptide. 2 residues coordinate substrate: Lys32 and Arg35. His37 (proton acceptor) is an active-site residue. Cystine bridges form between Cys50–Cys108, Cys64–Cys119, Cys82–Cys134, and Cys89–Cys96. Substrate-binding positions include Lys65 to Thr69, Lys90, and Arg109. Residue His143 is the Proton donor of the active site.

This sequence belongs to the pancreatic ribonuclease family. As to quaternary structure, monomer. Interacts with and forms tight 1:1 complexes with RNH1. Dimerization of two such complexes may occur. Interaction with RNH1 inhibits this protein. In terms of tissue distribution, pancreas.

It is found in the secreted. The enzyme catalyses an [RNA] containing cytidine + H2O = an [RNA]-3'-cytidine-3'-phosphate + a 5'-hydroxy-ribonucleotide-3'-[RNA].. It carries out the reaction an [RNA] containing uridine + H2O = an [RNA]-3'-uridine-3'-phosphate + a 5'-hydroxy-ribonucleotide-3'-[RNA].. Functionally, endonuclease that catalyzes the cleavage of RNA on the 3' side of pyrimidine nucleotides. Acts on single-stranded and double-stranded RNA. This Gerbilliscus gambianus (Gambian gerbil) protein is Ribonuclease pancreatic (RNASE1).